The chain runs to 87 residues: Large ribosomal subunit protein eL33 (87 aa).

Belongs to the eukaryotic ribosomal protein eL33 family.

The polypeptide is Large ribosomal subunit protein eL33 (Pyrococcus abyssi (strain GE5 / Orsay)).